A 338-amino-acid polypeptide reads, in one-letter code: Nicotinate-nucleotide--dimethylbenzimidazole phosphoribosyltransferase (338 aa).

The active-site Proton acceptor is glutamate 306.

The protein belongs to the CobT family.

It catalyses the reaction 5,6-dimethylbenzimidazole + nicotinate beta-D-ribonucleotide = alpha-ribazole 5'-phosphate + nicotinate + H(+). Its pathway is nucleoside biosynthesis; alpha-ribazole biosynthesis; alpha-ribazole from 5,6-dimethylbenzimidazole: step 1/2. Functionally, catalyzes the synthesis of alpha-ribazole-5'-phosphate from nicotinate mononucleotide (NAMN) and 5,6-dimethylbenzimidazole (DMB). This Cereibacter sphaeroides (strain ATCC 17023 / DSM 158 / JCM 6121 / CCUG 31486 / LMG 2827 / NBRC 12203 / NCIMB 8253 / ATH 2.4.1.) (Rhodobacter sphaeroides) protein is Nicotinate-nucleotide--dimethylbenzimidazole phosphoribosyltransferase.